The primary structure comprises 236 residues: Purine nucleoside phosphorylase DeoD-type 2 (236 aa).

Histidine 5 contacts a purine D-ribonucleoside. Residues glycine 21, arginine 25, arginine 44, and 88–91 (RVGS) each bind phosphate. A purine D-ribonucleoside is bound by residues 180-182 (DME) and 204-205 (SD). The active-site Proton donor is aspartate 205.

The protein belongs to the PNP/UDP phosphorylase family. As to quaternary structure, homohexamer; trimer of homodimers.

It carries out the reaction a purine D-ribonucleoside + phosphate = a purine nucleobase + alpha-D-ribose 1-phosphate. The enzyme catalyses a purine 2'-deoxy-D-ribonucleoside + phosphate = a purine nucleobase + 2-deoxy-alpha-D-ribose 1-phosphate. Catalyzes the reversible phosphorolytic breakdown of the N-glycosidic bond in the beta-(deoxy)ribonucleoside molecules, with the formation of the corresponding free purine bases and pentose-1-phosphate. The sequence is that of Purine nucleoside phosphorylase DeoD-type 2 from Photobacterium profundum (strain SS9).